Reading from the N-terminus, the 65-residue chain is UPF0434 protein PSHAa1659 (65 aa).

The protein belongs to the UPF0434 family.

The chain is UPF0434 protein PSHAa1659 from Pseudoalteromonas translucida (strain TAC 125).